An 83-amino-acid polypeptide reads, in one-letter code: UPF0147 protein TK2131 (83 aa).

This sequence belongs to the UPF0147 family.

This Thermococcus kodakarensis (strain ATCC BAA-918 / JCM 12380 / KOD1) (Pyrococcus kodakaraensis (strain KOD1)) protein is UPF0147 protein TK2131.